The sequence spans 62 residues: Amolopin-p-MT1 (62 aa).

Positions 1 to 22 (MFTLKKSLLLLFFLGTISLSLC) are cleaved as a signal peptide. A propeptide spans 23–42 (EQERGADEEENGGEVTEEEV) (removed in mature form).

This sequence belongs to the frog skin active peptide (FSAP) family. Brevinin subfamily. As to expression, expressed by the skin glands.

The protein localises to the secreted. Functionally, antimicrobial peptide. Active against a variety of Gram-negative and Gram-positive bacterial strains. Not active against fungi. Shows weak hemolytic activity against human erythrocytes. This is Amolopin-p-MT1 from Amolops mantzorum (Sichuan torrent frog).